We begin with the raw amino-acid sequence, 802 residues long: Phenylalanine--tRNA ligase beta subunit (802 aa).

Residues 40-149 (RPELDFVKIV…EGAEIGKTIR (110 aa)) enclose the tRNA-binding domain. The region spanning 407–484 (HKEVRIHTDI…RTRGYDTIQV (78 aa)) is the B5 domain. Residues Asp462, Asp468, Glu471, and Glu472 each contribute to the Mg(2+) site. An FDX-ACB domain is found at 710–802 (SQFPEAEIDI…LAGKNGFVLR (93 aa)).

Belongs to the phenylalanyl-tRNA synthetase beta subunit family. Type 1 subfamily. In terms of assembly, tetramer of two alpha and two beta subunits. The cofactor is Mg(2+).

It is found in the cytoplasm. The catalysed reaction is tRNA(Phe) + L-phenylalanine + ATP = L-phenylalanyl-tRNA(Phe) + AMP + diphosphate + H(+). This Leptospira borgpetersenii serovar Hardjo-bovis (strain L550) protein is Phenylalanine--tRNA ligase beta subunit.